We begin with the raw amino-acid sequence, 419 residues long: Mitochondrial chaperone BCS1 (419 aa).

Residues 1 to 15 (MPLSDFVLALKDNPY) lie on the Mitochondrial intermembrane side of the membrane. The chain crosses the membrane as a helical span at residues 16-32 (FGAGFGLVGVGTALALA). Topologically, residues 33-419 (RKGAQLGLVA…AIQNAESLRR (387 aa)) are mitochondrial matrix. Y181 is modified (phosphotyrosine). Position 230–237 (230–237 (GPPGCGKS)) interacts with ATP.

The protein belongs to the AAA ATPase family. BCS1 subfamily. Interacts with LETM1.

It is found in the mitochondrion inner membrane. The enzyme catalyses ATP + H2O = ADP + phosphate + H(+). Functionally, chaperone necessary for the incorporation of Rieske iron-sulfur protein UQCRFS1 into the mitochondrial respiratory chain complex III. Plays an important role in the maintenance of mitochondrial tubular networks, respiratory chain assembly and formation of the LETM1 complex. This is Mitochondrial chaperone BCS1 (BCS1L) from Bos taurus (Bovine).